Here is a 960-residue protein sequence, read N- to C-terminus: UvrABC system protein A (960 aa).

35–42 (GLSGSGKS) lines the ATP pocket. A C4-type zinc finger spans residues 270 to 297 (CAHCNVSVPELQPRLFSFNAPFGACPSC). ABC transporter domains lie at 327–605 (FKPE…QASL) and 625–953 (GNGN…WYIK). 657–664 (GVSGSGKS) serves as a coordination point for ATP. A C4-type zinc finger spans residues 756 to 782 (CEHCKGDGVITIEMNFLPDVYITCDVC).

It belongs to the ABC transporter superfamily. UvrA family. Forms a heterotetramer with UvrB during the search for lesions.

It localises to the cytoplasm. Its function is as follows. The UvrABC repair system catalyzes the recognition and processing of DNA lesions. UvrA is an ATPase and a DNA-binding protein. A damage recognition complex composed of 2 UvrA and 2 UvrB subunits scans DNA for abnormalities. When the presence of a lesion has been verified by UvrB, the UvrA molecules dissociate. The sequence is that of UvrABC system protein A from Treponema pallidum (strain Nichols).